Here is a 518-residue protein sequence, read N- to C-terminus: E3 ubiquitin-protein ligase TRIM39 (518 aa).

The RING-type zinc finger occupies 29 to 70; the sequence is CSVCLEYLKEPVIIECGHNFCKACITRWWEDLERDFPCPVCR. The B box-type zinc finger occupies 102–143; the sequence is RDESLCPQHHEALSLFCYEDQEAVCLICAISHTHRAHTVVPL. Zn(2+) contacts are provided by Cys107, His110, Cys129, and His135. The stretch at 181–250 forms a coiled coil; it reads ELKRLVESRR…AHLAAEVEGK (70 aa). Interaction with CDKN1A regions lie at residues 268–337 and 389–518; these read KNIP…QLIA and TSGR…TDWE. Positions 319 to 514 constitute a B30.2/SPRY domain; sequence SNFPRQYFAL…NAAPLTIRPP (196 aa).

It belongs to the TRIM/RBCC family. Interacts with MOAP1. Interacts with CDKN1A. Post-translationally, autoubiquitinated.

It is found in the cytoplasm. The protein localises to the cytosol. Its subcellular location is the mitochondrion. The protein resides in the nucleus. It catalyses the reaction S-ubiquitinyl-[E2 ubiquitin-conjugating enzyme]-L-cysteine + [acceptor protein]-L-lysine = [E2 ubiquitin-conjugating enzyme]-L-cysteine + N(6)-ubiquitinyl-[acceptor protein]-L-lysine.. The protein operates within protein modification; protein ubiquitination. In terms of biological role, E3 ubiquitin-protein ligase. May facilitate apoptosis by inhibiting APC/C-Cdh1-mediated poly-ubiquitination and subsequent proteasome-mediated degradation of the pro-apoptotic protein MOAP1. Regulates the G1/S transition of the cell cycle and DNA damage-induced G2 arrest by stabilizing CDKN1A/p21. Positively regulates CDKN1A/p21 stability by competing with DTL for CDKN1A/p21 binding, therefore disrupting DCX(DTL) E3 ubiquitin ligase complex-mediated CDKN1A/p21 ubiquitination and degradation. The polypeptide is E3 ubiquitin-protein ligase TRIM39 (TRIM39) (Pan troglodytes (Chimpanzee)).